Reading from the N-terminus, the 155-residue chain is Endoribonuclease YbeY (155 aa).

Zn(2+) is bound by residues H117, H121, and H127.

This sequence belongs to the endoribonuclease YbeY family. Zn(2+) is required as a cofactor.

It localises to the cytoplasm. Functionally, single strand-specific metallo-endoribonuclease involved in late-stage 70S ribosome quality control and in maturation of the 3' terminus of the 16S rRNA. This Psychrobacter cryohalolentis (strain ATCC BAA-1226 / DSM 17306 / VKM B-2378 / K5) protein is Endoribonuclease YbeY.